A 299-amino-acid chain; its full sequence is UPF0276 protein ABO_1518 (299 aa).

Belongs to the UPF0276 family.

The polypeptide is UPF0276 protein ABO_1518 (Alcanivorax borkumensis (strain ATCC 700651 / DSM 11573 / NCIMB 13689 / SK2)).